The chain runs to 417 residues: Oxidoreductase phnG (417 aa).

Residues 16–20 (GGSYA), R61, and D317 contribute to the 6-hydroxy-FAD site.

This sequence belongs to the FAD-dependent oxidoreductase family. It depends on 6-hydroxy-FAD as a cofactor.

The enzyme catalyses deoxyherqueinone + NADPH + O2 + H(+) = herqueinone + NADP(+) + H2O. It functions in the pathway secondary metabolite biosynthesis. Oxidoreductase; part of the gene cluster that mediates the biosynthesis of phenalenones such as herqueinone, compounds that have been reported to treat tumors, bacterial infections and/or mycoses, and rheumatic diseases. The non-reducing polyketide synthase phnA synthesizes the heptaketide backbone and cyclizes it into the angular, hemiketal-containing naphtho-gamma-pyrone prephenalenone. The product template (PT) domain of phnA catalyzes only the C4-C9 aldol condensation, which is unprecedented among known PT domains. The transformation of prephenalenone to phenalenones requires an FAD-dependent monooxygenase phnB, which catalyzes the C2 aromatic hydroxylation of prephenalenone and ring opening of the gamma-pyrone ring simultaneously. Subsequent intramolecular deprotonation of C3 phenolic oxygen accelerates phenalenone ring closure to yield the tricyclic phenalenone core with a C2 hydroxylation. The prenyltransferase phnF further catalyzes reverse C-prenylation of phenalenone by direct electrophilic substitution at C6, or possibly via first a forward O-prenylation of a neighboring phenol in phenalenone, followed by a Claisen rearrangement. The hydroalkoxylation enzyme phnH catalyzes the 5-exo-trig cyclization via acid catalysis after the spontaneous deprotonation of 7-OH, which leads to the formation of the dihydrobenzofuran atrovenetin. Atrovenetin is further converted to deoxyherqueinone by the O-methyltransferase phnC which can methylate C2-OH to stabilize the northern portion of the phenalenone core. Finally, the oxidoreductase phnG converts deoxyherqueinone to herqueinone via C6 hydroxylation. The protein is Oxidoreductase phnG of Penicillium herquei.